The following is a 394-amino-acid chain: 1-deoxy-D-xylulose 5-phosphate reductoisomerase (394 aa).

Positions 11, 12, 13, 14, 37, 39, and 126 each coordinate NADPH. 1-deoxy-D-xylulose 5-phosphate is bound at residue lysine 127. Position 128 (glutamate 128) interacts with NADPH. Aspartate 152 provides a ligand contact to Mn(2+). Residues serine 153, glutamate 154, serine 178, and histidine 201 each coordinate 1-deoxy-D-xylulose 5-phosphate. Glutamate 154 contributes to the Mn(2+) binding site. Glycine 207 is an NADPH binding site. The 1-deoxy-D-xylulose 5-phosphate site is built by serine 214, asparagine 219, lysine 220, and glutamate 223. Glutamate 223 is a Mn(2+) binding site.

This sequence belongs to the DXR family. Mg(2+) serves as cofactor. Mn(2+) is required as a cofactor.

It catalyses the reaction 2-C-methyl-D-erythritol 4-phosphate + NADP(+) = 1-deoxy-D-xylulose 5-phosphate + NADPH + H(+). It functions in the pathway isoprenoid biosynthesis; isopentenyl diphosphate biosynthesis via DXP pathway; isopentenyl diphosphate from 1-deoxy-D-xylulose 5-phosphate: step 1/6. Catalyzes the NADPH-dependent rearrangement and reduction of 1-deoxy-D-xylulose-5-phosphate (DXP) to 2-C-methyl-D-erythritol 4-phosphate (MEP). This chain is 1-deoxy-D-xylulose 5-phosphate reductoisomerase, found in Synechocystis sp. (strain ATCC 27184 / PCC 6803 / Kazusa).